We begin with the raw amino-acid sequence, 491 residues long: Ketol-acid reductoisomerase (NADP(+)) (491 aa).

Residues 15-208 enclose the KARI N-terminal Rossmann domain; the sequence is AQLGKCRFMG…GGHRAGVLES (194 aa). Residues 45-48, Arg-68, Arg-76, Ser-78, and 108-110 contribute to the NADP(+) site; these read CGAQ and DKQ. Residue His-132 is part of the active site. Gly-158 lines the NADP(+) pocket. KARI C-terminal knotted domains follow at residues 209 to 344 and 345 to 484; these read SFVA…TAPQ and YEGK…MTDM. Mg(2+) contacts are provided by Asp-217, Glu-221, Glu-389, and Glu-393. Position 414 (Ser-414) interacts with substrate.

It belongs to the ketol-acid reductoisomerase family. Requires Mg(2+) as cofactor.

It catalyses the reaction (2R)-2,3-dihydroxy-3-methylbutanoate + NADP(+) = (2S)-2-acetolactate + NADPH + H(+). The catalysed reaction is (2R,3R)-2,3-dihydroxy-3-methylpentanoate + NADP(+) = (S)-2-ethyl-2-hydroxy-3-oxobutanoate + NADPH + H(+). The protein operates within amino-acid biosynthesis; L-isoleucine biosynthesis; L-isoleucine from 2-oxobutanoate: step 2/4. It participates in amino-acid biosynthesis; L-valine biosynthesis; L-valine from pyruvate: step 2/4. In terms of biological role, involved in the biosynthesis of branched-chain amino acids (BCAA). Catalyzes an alkyl-migration followed by a ketol-acid reduction of (S)-2-acetolactate (S2AL) to yield (R)-2,3-dihydroxy-isovalerate. In the isomerase reaction, S2AL is rearranged via a Mg-dependent methyl migration to produce 3-hydroxy-3-methyl-2-ketobutyrate (HMKB). In the reductase reaction, this 2-ketoacid undergoes a metal-dependent reduction by NADPH to yield (R)-2,3-dihydroxy-isovalerate. In Shigella dysenteriae serotype 1 (strain Sd197), this protein is Ketol-acid reductoisomerase (NADP(+)).